The sequence spans 241 residues: Carboxy-S-adenosyl-L-methionine synthase (241 aa).

S-adenosyl-L-methionine-binding positions include Tyr-38, 63-65 (GCS), 88-89 (DN), 116-117 (DI), Asn-131, and Arg-198.

This sequence belongs to the class I-like SAM-binding methyltransferase superfamily. Cx-SAM synthase family. As to quaternary structure, homodimer.

The enzyme catalyses prephenate + S-adenosyl-L-methionine = carboxy-S-adenosyl-L-methionine + 3-phenylpyruvate + H2O. In terms of biological role, catalyzes the conversion of S-adenosyl-L-methionine (SAM) to carboxy-S-adenosyl-L-methionine (Cx-SAM). The sequence is that of Carboxy-S-adenosyl-L-methionine synthase from Haemophilus influenzae (strain PittGG).